The following is a 383-amino-acid chain: Trihelix transcription factor ASIL1 (383 aa).

Disordered regions lie at residues 1–32 (MEDDDEIQSIPSPGDSSLSPQAPPSPPILPTN), 61–94 (HTPSVTGGGGSGNRNGRGGGGGSGGGGGGRDDCW), 189–295 (IASS…SGVG), and 346–383 (EITQNNQEEEERSRQRGERRIVDDDDDRNGKNNGNVSS). Over residues 66-88 (TGGGGSGNRNGRGGGGGSGGGGG) the composition is skewed to gly residues. One can recognise a Myb-like domain in the interval 94–153 (WSEEATKVLIEAWGDRFSEPGKGTLKQQHWKEVAEIVNKSRQCKYPKTDIQCKNRIDTVK). Residues 206 to 225 (NSRSSMFKRQTKGNQIVQQQ) show a composition bias toward polar residues. Residues 226–235 (QEKRGSDSMR) show a composition bias toward basic and acidic residues. Residues 228 to 241 (KRGSDSMRWHFRKR) carry the Bipartite nuclear localization signal motif. Residues 246–262 (TESESDPEPEASPEESA) show a composition bias toward acidic residues. Residues 263–274 (ESLPPLQPIQPL) show a composition bias toward low complexity. Residues 304–365 (FTEAYEKAET…ERSRQRGERR (62 aa)) are a coiled coil. A compositionally biased stretch (basic and acidic residues) spans 356-367 (ERSRQRGERRIV).

It is found in the nucleus. In terms of biological role, transcription repressor that binds specific DNA sequence such as the GT-box-like motif 5'-CGTGATT-3' in the AT2S3 promoter. Negative regulator of seed maturation genes during seed germination and seedling development. May target GT-box-containing embryonic genes by competing with the binding of transcriptional activators to this promoter region. Contributes to the maintenance and control of seed filling and may repress the maturation program during early embryogenesis. The protein is Trihelix transcription factor ASIL1 of Arabidopsis thaliana (Mouse-ear cress).